The sequence spans 2260 residues: Protein Ycf2 (2260 aa).

ATP is bound at residue 1614–1621 (GSIGTGRS).

This sequence belongs to the Ycf2 family.

It localises to the plastid. The protein localises to the chloroplast stroma. In terms of biological role, probable ATPase of unknown function. Its presence in a non-photosynthetic plant (Epifagus virginiana) and experiments in tobacco indicate that it has an essential function which is probably not related to photosynthesis. The chain is Protein Ycf2 from Dioscorea elephantipes (Elephant's foot yam).